The following is a 372-amino-acid chain: Cyclin-dependent kinase 9 (372 aa).

Positions 19 to 315 (YEKLAKIGQG…SDDALNHDFF (297 aa)) constitute a Protein kinase domain. 25 to 33 (IGQGTFGEV) contributes to the ATP binding site. Residue K35 is modified to Phosphoserine. K44 is subject to N6-acetyllysine; by EP300/CBP, PCAF/KAT2B and GCN5/KAT2A. Residue K48 coordinates ATP. K48 is modified (N6-acetyllysine; by PCAF/KAT2B and GCN5/KAT2A). N54 carries the phosphothreonine modification. An ATP-binding site is contributed by 104–106 (DFC). D149 (proton acceptor) is an active-site residue. The T-loop stretch occupies residues 166 to 191 (ADFGLARAFSLAKNSQPNRYTNRVVT). D167 contributes to the ATP binding site. A Phosphoserine modification is found at S175. At T186 the chain carries Phosphothreonine; by CaMK1D. The disordered stretch occupies residues 343 to 372 (RRKGSQITQQSTNQSRNPATTNQTEFERVF). The residue at position 347 (S347) is a Phosphoserine; by CDK9 and PKA. Positions 347–366 (SQITQQSTNQSRNPATTNQT) are enriched in polar residues. A Phosphothreonine; by CDK9 modification is found at T350. S353 bears the Phosphoserine; by CDK9 mark. T354 is subject to Phosphothreonine; by CDK9. Position 357 is a phosphoserine; by CDK9 (S357). Phosphothreonine; by CDK9 occurs at positions 362 and 363.

The protein belongs to the protein kinase superfamily. CMGC Ser/Thr protein kinase family. CDC2/CDKX subfamily. Component of the super elongation complex (SEC), at least composed of EAF1, EAF2, CDK9, MLLT3/AF9, AFF (AFF1 or AFF4), the P-TEFb complex and ELL (ELL, ELL2 or ELL3). Associates with CCNT1/cyclin-T1, CCNT2/cyclin-T2 (isoform A and isoform B) or CCNK/cyclin-K to form active P-TEFb. P-TEFb forms a complex with AFF4/AF5Q31 and is part of the super elongation complex (SEC). Component of a complex which is composed of at least 5 members: HTATSF1/Tat-SF1, P-TEFb complex, RNA pol II, SUPT5H and NCL/nucleolin. Associates with UBR5 and forms a transcription regulatory complex composed of CDK9, RNAP II, UBR5 and TFIIS/TCEA1 that can stimulate target gene transcription (e.g. gamma fibrinogen/FGG) by recruiting their promoters. Component of the 7SK snRNP inactive complex which is composed of at least 8 members: P-TEFb (composed of CDK9 and CCNT1/cyclin-T1), HEXIM1, HEXIM2, LARP7, BCDIN3, SART3 proteins and 7SK and U6 snRNAs. This inactive 7SK snRNP complex can also interact with NCOR1 and HDAC3, probably to regulate CDK9 acetylation. Release of P-TEFb from P-TEFb/7SK snRNP complex requires both PP2B to transduce calcium Ca(2+) signaling in response to stimuli (e.g. UV or hexamethylene bisacetamide (HMBA)) and PPP1CA to dephosphorylate Thr-186. This released P-TEFb remains inactive in the pre-initiation complex with BRD4 until new Thr-186 phosphorylation occurs after the synthesis of a short RNA. Interacts with BRD4; to target chromatin binding. Interacts with JMJD6. Interacts with activated nuclear STAT3 and RELA/p65. Binds to AR and MYOD1. Forms a complex composed of CDK9, CCNT1/cyclin-T1, EP300 and GATA4 that stimulates hypertrophy in cardiomyocytes. The large PER complex involved in the repression of transcriptional termination is composed of at least PER2, CDK9, DDX5, DHX9, NCBP1 and POLR2A. Interacts with HSF1. Interacts with TBX21. Isoform 3: binds to KU70/XRCC6. Interacts with WDR43. Interacts with ZMYND8; the association appears to occur between homodimeric ZMYND8 and the activated form of the P-TEFb complex. In terms of assembly, (Microbial infection) Interacts with the acidic/proline-rich region of HIV-1 and HIV-2 Tat via T-loop region and is thus required for HIV to hijack host transcription machinery during its replication through cooperative binding to viral TAR RNA. As to quaternary structure, (Microbial infection) Interacts with human herpes virus 1 (HHV-1) protein ICP22; this interaction blocks the recruitment of positive transcription elongation factor b (P-TEFb) to the viral promoter. Post-translationally, autophosphorylation at Thr-186, Ser-347, Thr-350, Ser-353, Thr-354 and Ser-357 triggers kinase activity by promoting cyclin and substrate binding (e.g. HIV TAT) upon conformational changes. Thr-186 phosphorylation requires the calcium Ca(2+) signaling pathway, including CaMK1D and calmodulin. This inhibition is relieved by Thr-29 dephosphorylation. However, phosphorylation at Thr-29 is inhibitory within the HIV transcription initiation complex. Phosphorylation at Ser-175 inhibits kinase activity. Can be phosphorylated on either Thr-362 or Thr-363 but not on both simultaneously. In terms of processing, dephosphorylation of Thr-186 by PPM1A and PPM1B blocks CDK9 activity and may lead to CDK9 proteasomal degradation. However, PPP1CA-mediated Thr-186 dephosphorylation is required to release P-TEFb from its inactive P-TEFb/7SK snRNP complex. Dephosphorylated at Ser-347 by the PNUTS-PP1 complex during RNA polymerase II transcription pause-release. Dephosphorylation of C-terminus Thr and Ser residues by protein phosphatase-1 (PP1) triggers CDK9 activity, contributing to the activation of HIV-1 transcription. N6-acetylation of Lys-44 promotes kinase activity, whereas acetylation of both Lys-44 and Lys-48 mediated by PCAF/KAT2B and GCN5/KAT2A reduces kinase activity. The acetylated form associates with PML bodies in the nuclear matrix and with the transcriptionally silent HIV-1 genome; deacetylated upon transcription stimulation. Deacetylated by SIRT7, promoting the kinase activity and subsequent 'Ser-2' phosphorylation of the C-terminal domain (CTD) of RNA polymerase II. Post-translationally, polyubiquitinated and thus activated by UBR5. This ubiquitination is promoted by TFIIS/TCEA1 and favors 'Ser-2' phosphorylation of RPB1/POLR2A CTD. In terms of tissue distribution, ubiquitous.

It localises to the nucleus. The protein localises to the cytoplasm. The protein resides in the PML body. It catalyses the reaction L-seryl-[protein] + ATP = O-phospho-L-seryl-[protein] + ADP + H(+). It carries out the reaction L-threonyl-[protein] + ATP = O-phospho-L-threonyl-[protein] + ADP + H(+). The enzyme catalyses [DNA-directed RNA polymerase] + ATP = phospho-[DNA-directed RNA polymerase] + ADP + H(+). Its activity is regulated as follows. Inhibited by CDKI-71, CR8, GPC-286199, AG-024322, flavopiridol (alvocidib), RBG-286147, anilinopyrimidine 32, arylazopyrazole 31b, indirubin 3'-monoxime, meriolin 3,P276-00, olomoucine II, pyrazolotriazine, meriolin, variolin, thiazolyl-pyrimidine, thiazolyl-pyrimidine, indirubin-30-monoxime, ZK 304709, AG-012986, AT7519, R547, RGB-286638, imidazole pyrimidine, EXEL-3700, EXEL-8647, 5,6-dichloro-1-b-ribofur-anosyl-benzimidazole (DRB), P276-00, roscovitine (seliciclib, CYC202) and SNS-032 (BMS-387032). Activation by Thr-186 phosphorylation is calcium Ca(2+) signaling pathway-dependent; actively inactivated by dephosphorylation mediated by PPP1CA, PPM1A and PPM1B. Reversibly repressed by acetylation at Lys-44 and Lys-48. In terms of biological role, protein kinase involved in the regulation of transcription. Member of the cyclin-dependent kinase pair (CDK9/cyclin-T) complex, also called positive transcription elongation factor b (P-TEFb), which facilitates the transition from abortive to productive elongation by phosphorylating the CTD (C-terminal domain) of the large subunit of RNA polymerase II (RNAP II) POLR2A, SUPT5H and RDBP. This complex is inactive when in the 7SK snRNP complex form. Phosphorylates EP300, MYOD1, RPB1/POLR2A and AR and the negative elongation factors DSIF and NELFE. Regulates cytokine inducible transcription networks by facilitating promoter recognition of target transcription factors (e.g. TNF-inducible RELA/p65 activation and IL-6-inducible STAT3 signaling). Promotes RNA synthesis in genetic programs for cell growth, differentiation and viral pathogenesis. P-TEFb is also involved in cotranscriptional histone modification, mRNA processing and mRNA export. Modulates a complex network of chromatin modifications including histone H2B monoubiquitination (H2Bub1), H3 lysine 4 trimethylation (H3K4me3) and H3K36me3; integrates phosphorylation during transcription with chromatin modifications to control co-transcriptional histone mRNA processing. The CDK9/cyclin-K complex has also a kinase activity towards CTD of RNAP II and can substitute for CDK9/cyclin-T P-TEFb in vitro. Replication stress response protein; the CDK9/cyclin-K complex is required for genome integrity maintenance, by promoting cell cycle recovery from replication arrest and limiting single-stranded DNA amount in response to replication stress, thus reducing the breakdown of stalled replication forks and avoiding DNA damage. In addition, probable function in DNA repair of isoform 2 via interaction with KU70/XRCC6. Promotes cardiac myocyte enlargement. RPB1/POLR2A phosphorylation on 'Ser-2' in CTD activates transcription. AR phosphorylation modulates AR transcription factor promoter selectivity and cell growth. DSIF and NELF phosphorylation promotes transcription by inhibiting their negative effect. The phosphorylation of MYOD1 enhances its transcriptional activity and thus promotes muscle differentiation. Catalyzes phosphorylation of KAT5, promoting KAT5 recruitment to chromatin and histone acetyltransferase activity. The chain is Cyclin-dependent kinase 9 from Homo sapiens (Human).